The primary structure comprises 831 residues: Glycerol-3-phosphate acyltransferase (831 aa).

An HXXXXD motif motif is present at residues 304-309 (CHRSHM). A disordered region spans residues 801–831 (VSMPAETSNQPEAPETPETPETPEPEGKTES).

The protein belongs to the GPAT/DAPAT family.

The protein localises to the cell inner membrane. It catalyses the reaction sn-glycerol 3-phosphate + an acyl-CoA = a 1-acyl-sn-glycero-3-phosphate + CoA. Its pathway is phospholipid metabolism; CDP-diacylglycerol biosynthesis; CDP-diacylglycerol from sn-glycerol 3-phosphate: step 1/3. The protein is Glycerol-3-phosphate acyltransferase of Yersinia pseudotuberculosis serotype IB (strain PB1/+).